Consider the following 206-residue polypeptide: Small ribosomal subunit protein uS4 (206 aa).

Positions 18-46 are disordered; it reads NIWGRPKSPVNRREYGPGQHGQRRKGKIS. The region spanning 94–154 is the S4 RNA-binding domain; the sequence is RRLDAVVYRA…DRSKQMVALI (61 aa).

Belongs to the universal ribosomal protein uS4 family. As to quaternary structure, part of the 30S ribosomal subunit. Contacts protein S5. The interaction surface between S4 and S5 is involved in control of translational fidelity.

Functionally, one of the primary rRNA binding proteins, it binds directly to 16S rRNA where it nucleates assembly of the body of the 30S subunit. In terms of biological role, with S5 and S12 plays an important role in translational accuracy. The polypeptide is Small ribosomal subunit protein uS4 (Roseobacter denitrificans (strain ATCC 33942 / OCh 114) (Erythrobacter sp. (strain OCh 114))).